The primary structure comprises 328 residues: Phenylalanine--tRNA ligase alpha subunit (328 aa).

Residue E245 coordinates Mg(2+).

Belongs to the class-II aminoacyl-tRNA synthetase family. Phe-tRNA synthetase alpha subunit type 1 subfamily. In terms of assembly, tetramer of two alpha and two beta subunits. It depends on Mg(2+) as a cofactor.

Its subcellular location is the cytoplasm. The enzyme catalyses tRNA(Phe) + L-phenylalanine + ATP = L-phenylalanyl-tRNA(Phe) + AMP + diphosphate + H(+). In Helicobacter pylori (strain P12), this protein is Phenylalanine--tRNA ligase alpha subunit.